Here is a 223-residue protein sequence, read N- to C-terminus: Regulator of G-protein signaling 19 (223 aa).

Residues 1–30 (MPTPPEAEKQQTGPEEADQPPSMSSHDAAP) are disordered. Low complexity predominate over residues 20–29 (PPSMSSHDAA). A phosphoserine mark is found at Ser-24 and Ser-103. In terms of domain architecture, RGS spans 96–212 (SFDKLMHSPA…LSSPAYRALL (117 aa)). The residue at position 157 (Ser-157) is a Phosphoserine; by MAPK1 and MAPK3. The tract at residues 213 to 223 (LQGASQSSSEA) is interaction with GIPC.

In terms of assembly, interacts with GIPC PDZ domain. Interacts with GNAO1. Post-translationally, fatty acylated. Heavily palmitoylated in the cysteine string motif. In terms of processing, phosphorylated, mainly on serine residues.

It is found in the membrane. Its function is as follows. Inhibits signal transduction by increasing the GTPase activity of G protein alpha subunits thereby driving them into their inactive GDP-bound form. Binds to G-alpha subfamily 1 members, with the order G(i)a3 &gt; G(i)a1 &gt; G(o)a &gt;&gt; G(z)a/G(i)a2. Activity on G(z)-alpha is inhibited by phosphorylation and palmitoylation of the G-protein. The polypeptide is Regulator of G-protein signaling 19 (RGS19) (Bos taurus (Bovine)).